The primary structure comprises 740 residues: ATP-dependent zinc metalloprotease YME1L (740 aa).

Residues 1-256 (MFSTTTHSVP…KSGKTMKYLK (256 aa)) are Mitochondrial matrix-facing. Residues 257-277 (TLQTIVVIVVFLGIFLSFFTT) traverse the membrane as a helical segment. At 278-740 (SNGSVFRSIQ…IKAILNESQT (463 aa)) the chain is on the mitochondrial intermembrane side. 347 to 351 (GTGKT) is a binding site for ATP. His563 serves as a coordination point for Zn(2+). The active site involves Glu564. 2 residues coordinate Zn(2+): His567 and Asp641.

The protein in the N-terminal section; belongs to the AAA ATPase family. In the C-terminal section; belongs to the peptidase M41 family. It depends on Zn(2+) as a cofactor.

It is found in the mitochondrion inner membrane. ATP-dependent metalloprotease that catalyzes the degradation of folded and unfolded proteins with a suitable degron sequence in the mitochondrial intermembrane region. Plays an important role in regulating mitochondrial morphology and function by cleaving Opa1, giving rise to a form of Opa1 that promotes maintenance of normal mitochondrial structure and mitochondrial protein metabolism. Ensures cell proliferation, maintains normal cristae morphology and complex I respiration activity, promotes antiapoptotic activity and protects mitochondria from the accumulation of oxidatively damaged membrane proteins. Required to control the accumulation of nonassembled respiratory chain subunits such as ND-30. This Drosophila melanogaster (Fruit fly) protein is ATP-dependent zinc metalloprotease YME1L.